Consider the following 221-residue polypeptide: Ribonuclease T (221 aa).

The 175-residue stretch at 21-195 folds into the Exonuclease domain; sequence VVIDIESAGF…YDTIQTAYLF (175 aa). Positions 24, 26, 182, and 187 each coordinate Mg(2+). Residue His182 is the Proton donor/acceptor of the active site.

Belongs to the RNase T family. Homodimer. It depends on Mg(2+) as a cofactor.

In terms of biological role, trims short 3' overhangs of a variety of RNA species, leaving a one or two nucleotide 3' overhang. Responsible for the end-turnover of tRNA: specifically removes the terminal AMP residue from uncharged tRNA (tRNA-C-C-A). Also appears to be involved in tRNA biosynthesis. The polypeptide is Ribonuclease T (Buchnera aphidicola subsp. Cinara cedri (strain Cc)).